We begin with the raw amino-acid sequence, 250 residues long: Phosphoribosylaminoimidazole-succinocarboxamide synthase (250 aa).

This sequence belongs to the SAICAR synthetase family.

It catalyses the reaction 5-amino-1-(5-phospho-D-ribosyl)imidazole-4-carboxylate + L-aspartate + ATP = (2S)-2-[5-amino-1-(5-phospho-beta-D-ribosyl)imidazole-4-carboxamido]succinate + ADP + phosphate + 2 H(+). Its pathway is purine metabolism; IMP biosynthesis via de novo pathway; 5-amino-1-(5-phospho-D-ribosyl)imidazole-4-carboxamide from 5-amino-1-(5-phospho-D-ribosyl)imidazole-4-carboxylate: step 1/2. The chain is Phosphoribosylaminoimidazole-succinocarboxamide synthase from Chloroflexus aggregans (strain MD-66 / DSM 9485).